The following is a 994-amino-acid chain: Glutamate [NMDA] receptor subunit 1 (994 aa).

The signal sequence occupies residues 1–23; the sequence is MAADGFVYRWLLFGTTIVLLAEA. Over 24 to 570 the chain is Extracellular; that stretch reads AQRHTASDNP…TLVSFLQPFS (547 aa). Asparagine 255, asparagine 311, asparagine 342, asparagine 394, asparagine 451, asparagine 478, and asparagine 498 each carry an N-linked (GlcNAc...) asparagine glycan. Glycine contacts are provided by residues 527 to 529 and arginine 534; that span reads PLT. Residues 571 to 591 form a helical membrane-spanning segment; sequence NTLWILVMVSVHVVALVLYLL. Residues 592–648 lie on the Cytoplasmic side of the membrane; that stretch reads DRFSPFGRFKLSHSDSNEEKALNLSSAVWFAWGVLLNSGIGEGTPRSFSARVLGMVW. A helical transmembrane segment spans residues 649–669; the sequence is AGFAMIIVASYTANLAAFLVL. At 670 to 828 the chain is on the extracellular side; sequence ERPKTKLSGI…KTPNTLGLKN (159 aa). Asparagine 690 carries an N-linked (GlcNAc...) asparagine glycan. Glycine is bound by residues serine 700 and aspartate 744. Residues 829-849 form a helical membrane-spanning segment; that stretch reads MAGVFILVGVGIAGGVGLIII. Residues 850–994 lie on the Cytoplasmic side of the membrane; the sequence is EVIYKKHQVK…YTSDVSHLVV (145 aa). Positions 971-994 are disordered; sequence RPQQNMLPPRYSPGYTSDVSHLVV. A compositionally biased stretch (polar residues) spans 984 to 994; that stretch reads GYTSDVSHLVV.

It belongs to the glutamate-gated ion channel (TC 1.A.10.1) family. Forms a heteromeric NMDA channel with Nmdar2.

It localises to the cell membrane. It is found in the postsynaptic cell membrane. The protein resides in the postsynaptic density. In terms of biological role, NMDA receptor subtype of glutamate-gated ion channels with high calcium permeability and voltage-dependent sensitivity to magnesium. Mediated by glycine. This protein plays a key role in synaptic plasticity, synaptogenesis, excitotoxicity, memory acquisition and learning. It mediates neuronal functions in glutamate neurotransmission. Is involved in the cell surface targeting of NMDA receptors. Plays a role in associative learning and in long-term memory consolidation. The polypeptide is Glutamate [NMDA] receptor subunit 1 (Drosophila ananassae (Fruit fly)).